A 101-amino-acid polypeptide reads, in one-letter code: Multivesicular body sorting factor 12 (101 aa).

An N-acetylmethionine modification is found at M1. Phosphoserine is present on S94.

As to quaternary structure, component of the ESCRT-I complex (endosomal sorting complex required for transport I) which consists of STP22, VPS28, SRN2 and MVB12 in a 1:1:1:1 stoichiometry. Interacts with STP22 and SRN2.

The protein localises to the cytoplasm. Its subcellular location is the endosome. It localises to the late endosome membrane. In terms of biological role, component of the ESCRT-I complex, a regulator of vesicular trafficking process. Binds to ubiquitinated cargo proteins and is required for the sorting of endocytic ubiquitinated cargos into multivesicular bodies (MVBs). Appears to be involved in cargo sorting and release of the ESCRT-I complex from the MVBs. This chain is Multivesicular body sorting factor 12 (MVB12), found in Saccharomyces cerevisiae (strain ATCC 204508 / S288c) (Baker's yeast).